The following is a 146-amino-acid chain: Urease accessory protein UreE 1 (146 aa).

It belongs to the UreE family.

The protein localises to the cytoplasm. Functionally, involved in urease metallocenter assembly. Binds nickel. Probably functions as a nickel donor during metallocenter assembly. The polypeptide is Urease accessory protein UreE 1 (Pseudomonas syringae pv. syringae (strain B728a)).